A 414-amino-acid polypeptide reads, in one-letter code: Transposon Ty4-J Gag polyprotein (414 aa).

Residues 39 to 115 (RKVSIKDEQV…IQLLETNENN (77 aa)) adopt a coiled-coil conformation. The segment at 378–414 (GAQRQQPLKSSAKRTKVLEQDTKKVEQSVQQQKTGNY) is disordered. Over residues 393–403 (KVLEQDTKKVE) the composition is skewed to basic and acidic residues. Over residues 404–414 (QSVQQQKTGNY) the composition is skewed to polar residues.

Capsid protein (CA) is the structural component of the virus-like particle (VLP), forming the shell that encapsulates the retrotransposons dimeric RNA genome. This is Transposon Ty4-J Gag polyprotein (TY4A-J) from Saccharomyces cerevisiae (strain ATCC 204508 / S288c) (Baker's yeast).